The primary structure comprises 253 residues: Type III pantothenate kinase (253 aa).

6 to 13 (DVGNTNIV) serves as a coordination point for ATP. Position 107-110 (107-110 (GADR)) interacts with substrate. The active-site Proton acceptor is the D109. Residue D129 participates in K(+) binding. Position 132 (T132) interacts with ATP. Position 184 (T184) interacts with substrate.

This sequence belongs to the type III pantothenate kinase family. As to quaternary structure, homodimer. It depends on NH4(+) as a cofactor. Requires K(+) as cofactor.

The protein localises to the cytoplasm. The catalysed reaction is (R)-pantothenate + ATP = (R)-4'-phosphopantothenate + ADP + H(+). It functions in the pathway cofactor biosynthesis; coenzyme A biosynthesis; CoA from (R)-pantothenate: step 1/5. In terms of biological role, catalyzes the phosphorylation of pantothenate (Pan), the first step in CoA biosynthesis. The polypeptide is Type III pantothenate kinase (Exiguobacterium sibiricum (strain DSM 17290 / CCUG 55495 / CIP 109462 / JCM 13490 / 255-15)).